We begin with the raw amino-acid sequence, 145 residues long: MLMPKRVKHRKVQRGRMKGVATRGNKVVHGDYGLQALEPAWITSNQIEAARIAMTRFIKRGGKVWIKIFPDKPVTKKPAETRMGSGKGSPEYWVAVVKPGRVLFEIAGVSEEVAREALRLAMHKLPIKCKFVAREDEMGGEANES.

Positions 1 to 17 are enriched in basic residues; the sequence is MLMPKRVKHRKVQRGRM. The disordered stretch occupies residues 1-20; the sequence is MLMPKRVKHRKVQRGRMKGV.

It belongs to the universal ribosomal protein uL16 family. In terms of assembly, part of the 50S ribosomal subunit.

Functionally, binds 23S rRNA and is also seen to make contacts with the A and possibly P site tRNAs. The chain is Large ribosomal subunit protein uL16 from Acetivibrio thermocellus (strain ATCC 27405 / DSM 1237 / JCM 9322 / NBRC 103400 / NCIMB 10682 / NRRL B-4536 / VPI 7372) (Clostridium thermocellum).